The following is a 129-amino-acid chain: Large ribosomal subunit protein bL12 (129 aa).

The protein belongs to the bacterial ribosomal protein bL12 family. In terms of assembly, homodimer. Part of the ribosomal stalk of the 50S ribosomal subunit. Forms a multimeric L10(L12)X complex, where L10 forms an elongated spine to which 2 to 4 L12 dimers bind in a sequential fashion. Binds GTP-bound translation factors.

Its function is as follows. Forms part of the ribosomal stalk which helps the ribosome interact with GTP-bound translation factors. Is thus essential for accurate translation. The polypeptide is Large ribosomal subunit protein bL12 (Treponema denticola (strain ATCC 35405 / DSM 14222 / CIP 103919 / JCM 8153 / KCTC 15104)).